Consider the following 321-residue polypeptide: MIPTTVLSNNVEMPLIGLGTTHSGGYYHDAVLHSIKKCGYRLIDTAKRYGVEKQLGIAVKNCSVPREEMFLSTKLWPVDCGDEVYNAFQTSCEKLQTDYLDMYMIHMPQLPDWIVNQKETKEKTWRQMELLYEDEHVRSIGVSNYSIEDLDELLEFASILPHANQVELHPWFHQADLKNYCDELGILTMGYCPLAKGKYLEDETLCKIASKYQKSPAQICLRWSIQQNVPTVPKSTDCRRLKENTNVFDFELSAEDMNTLNSFSSQNRKIVDLSNICQKMSLPDGYKLNGRVFGVPEEDETIPKSCSKCAQKQNVPLPVCI.

The active-site Proton donor is the Y49. H106 provides a ligand contact to substrate.

It belongs to the aldo/keto reductase family.

This is an uncharacterized protein from Caenorhabditis elegans.